Reading from the N-terminus, the 145-residue chain is Large ribosomal subunit protein bL9 (145 aa).

This sequence belongs to the bacterial ribosomal protein bL9 family.

Functionally, binds to the 23S rRNA. This chain is Large ribosomal subunit protein bL9, found in Ureaplasma urealyticum serovar 10 (strain ATCC 33699 / Western).